Here is a 539-residue protein sequence, read N- to C-terminus: Probable transcription factor GLK2 (539 aa).

The disordered stretch occupies residues 86–218 (FASSPDDEPP…NSHGKRKVKV (133 aa)). 2 stretches are compositionally biased toward low complexity: residues 99 to 111 (SAPG…AAAG) and 121 to 130 (AAAAAAAAAA). Residues 144 to 161 (KKDDEERSSSLPEEKDAK) show a composition bias toward basic and acidic residues. The 60-residue stretch at 212–271 (GKRKVKVDWTPELHRRFVQAVEQLGIDKAVPSRILELMGIECLTRHNIASHLQKYRSHRK) folds into the HTH myb-type domain. Positions 242–267 (PSRILELMGIECLTRHNIASHLQKYR) form a DNA-binding region, H-T-H motif.

As to expression, expressed in leaves.

The protein resides in the nucleus. Functionally, probable transcriptional activator that promotes chloroplast development. Acts as an activator of nuclear photosynthetic genes involved in chlorophyll biosynthesis, light harvesting, and electron transport. The chain is Probable transcription factor GLK2 (GLK2) from Oryza sativa subsp. japonica (Rice).